The chain runs to 114 residues: Fumarate reductase subunit D (114 aa).

Helical transmembrane passes span 24 to 44 (ISAL…PLGI), 49 to 69 (GIIA…LTIF), and 94 to 114 (LIFY…VASI).

Belongs to the FrdD family. Part of an enzyme complex containing four subunits: a flavoprotein (FrdA), an iron-sulfur protein (FrdB), and two hydrophobic anchor proteins (FrdC and FrdD).

It localises to the cell inner membrane. In terms of biological role, anchors the catalytic components of the fumarate reductase complex to the cell membrane, binds quinones. In Actinobacillus succinogenes (strain ATCC 55618 / DSM 22257 / CCUG 43843 / 130Z), this protein is Fumarate reductase subunit D.